A 706-amino-acid polypeptide reads, in one-letter code: Solute carrier organic anion transporter family member 6C1 (706 aa).

The disordered stretch occupies residues 1 to 24 (MAHVRNKKSDDKKAMVVAKEDTNK). Over 1–94 (MAHVRNKKSD…PFVQRFNNID (94 aa)) the chain is Cytoplasmic. The span at 7-24 (KKSDDKKAMVVAKEDTNK) shows a compositional bias: basic and acidic residues. The chain crosses the membrane as a helical span at residues 95–118 (GFMTLYVAAVLIHGALFAVVDMTL). Over 119 to 130 (NIYQVQFSLTRT) the chain is Extracellular. Residues 131–151 (EWYLMDFSDYIASFVVAIIIA) traverse the membrane as a helical segment. Residues 152-159 (HFGSKGNR) are Cytoplasmic-facing. Residues 160–180 (TRWIAASCILMGLESMLFAFP) form a helical membrane-spanning segment. At 181–218 (FFTYEIIIPGRQSIELCMEENEKRNIICGNSVPNRSKC) the chain is on the extracellular side. The N-linked (GlcNAc...) asparagine glycan is linked to Asn-214. Residues 219–241 (IYFHIAGQCIHGIAGMPIYILGI) traverse the membrane as a helical segment. The Cytoplasmic segment spans residues 242-253 (TFIFDHIPTSSC). The chain crosses the membrane as a helical span at residues 254 to 277 (GFYLAIGHSAYLIGYLLGMVGGLQ). Residues 278-301 (NFQPPPKEKTVEIEPAKVYQLLQS) are Extracellular-facing. The chain crosses the membrane as a helical span at residues 302 to 324 (GWWKTFLIIAAISFCVSFMMVCF). Topologically, residues 325-374 (PTSLPGAHKLRLAKRKEPPTIDRRLKDMKIQPHLKGFLHNIWHILKNPLM) are cytoplasmic. The chain crosses the membrane as a helical span at residues 375 to 396 (LTQAICKVSEYLTFNTSLYFLP). Residues 397-410 (HHLQTQFLITPGIA) are Extracellular-facing. A helical membrane pass occupies residues 411-432 (SLLTGAFVLPGGIIGHFLGGLI). Residues 433–445 (VDRLEMTNKNKLK) lie on the Cytoplasmic side of the membrane. A helical membrane pass occupies residues 446–466 (FTLVTTVVSVGLFLLIFFVEC). The Extracellular segment spans residues 467–565 (QTTTFAGINE…IAGTCDSDCL (99 aa)). Residues 485–540 (GNLTADCNEYCDCTTSLYTSICGRDEKEYFSPCFAGCKATKVSQTEKTYYNCSCIK) enclose the Kazal-like domain. An N-linked (GlcNAc...) asparagine glycan is attached at Asn-486. Intrachain disulfides connect Cys-491–Cys-521, Cys-497–Cys-517, and Cys-506–Cys-538. An N-linked (GlcNAc...) asparagine glycan is attached at Asn-535. A helical membrane pass occupies residues 566–589 (KLPLFFAFYFSATVFSNMCSIPVI). The Cytoplasmic segment spans residues 590 to 604 (SIILQSVPANFTSLS). The chain crosses the membrane as a helical span at residues 605-624 (LGVTYAIVKFVASVPAPLLF). Topologically, residues 625–652 (RLSSAIACIYWDNNRCGGKERCWIYNKN) are extracellular. Residues 653–675 (ILVYEFMGIWMSSQLIIVLLNIY) form a helical membrane-spanning segment. At 676-706 (AIQIHDVVVHGEITESKTTVKDVKEQKERKA) the chain is on the cytoplasmic side.

It belongs to the organo anion transporter (TC 2.A.60) family. In terms of assembly, component of the CatSper complex or CatSpermasome composed of the core pore-forming members CATSPER1, CATSPER2, CATSPER3 and CATSPER4 as well as auxiliary members CATSPERB, CATSPERG2, CATSPERD, CATSPERE, CATSPERZ, C2CD6/CATSPERT, SLCO6C1, TMEM249, TMEM262 and EFCAB9. HSPA1 may be an additional auxiliary complex member. The core complex members CATSPER1, CATSPER2, CATSPER3 and CATSPER4 form a heterotetrameric channel. The auxiliary CATSPERB, CATSPERG2, CATSPERD and CATSPERE subunits form a pavilion-like structure over the pore which stabilizes the complex through interactions with CATSPER4, CATSPER3, CATSPER1 and CATSPER2 respectively. SLCO6C1 interacts with CATSPERE and TMEM262/CATSPERH interacts with CATSPERB, further stabilizing the complex. C2CD6/CATSPERT interacts at least with CATSPERD and is required for targeting the CatSper complex in the flagellar membrane.

The protein resides in the cell projection. The protein localises to the cilium. It is found in the flagellum membrane. Auxiliary component of the CatSper complex, a complex involved in sperm cell hyperactivation. The chain is Solute carrier organic anion transporter family member 6C1 from Mus musculus (Mouse).